The sequence spans 860 residues: Leucine--tRNA ligase (860 aa).

Residues 42-52 (PYPSGRLHMGH) carry the 'HIGH' region motif. A 'KMSKS' region motif is present at residues 619–623 (KMSKS). An ATP-binding site is contributed by Lys-622.

It belongs to the class-I aminoacyl-tRNA synthetase family.

It localises to the cytoplasm. It catalyses the reaction tRNA(Leu) + L-leucine + ATP = L-leucyl-tRNA(Leu) + AMP + diphosphate. The chain is Leucine--tRNA ligase from Mannheimia succiniciproducens (strain KCTC 0769BP / MBEL55E).